The chain runs to 221 residues: 7-cyano-7-deazaguanine synthase (221 aa).

7 to 17 lines the ATP pocket; that stretch reads LSGGMDSTTLL. Positions 183, 191, 194, and 197 each coordinate Zn(2+).

Belongs to the QueC family. As to quaternary structure, homodimer. The cofactor is Zn(2+).

The enzyme catalyses 7-carboxy-7-deazaguanine + NH4(+) + ATP = 7-cyano-7-deazaguanine + ADP + phosphate + H2O + H(+). It participates in purine metabolism; 7-cyano-7-deazaguanine biosynthesis. Functionally, catalyzes the ATP-dependent conversion of 7-carboxy-7-deazaguanine (CDG) to 7-cyano-7-deazaguanine (preQ(0)). The polypeptide is 7-cyano-7-deazaguanine synthase (Caldicellulosiruptor bescii (strain ATCC BAA-1888 / DSM 6725 / KCTC 15123 / Z-1320) (Anaerocellum thermophilum)).